The chain runs to 258 residues: uncharacterized protein (258 aa).

The next 4 helical transmembrane spans lie at Leu-33–Asn-53, Phe-59–Phe-79, Leu-88–Phe-108, and Ile-140–Gln-160. Residues Asn-237–Glu-258 form a disordered region. Positions Ser-242–Glu-258 are enriched in polar residues.

The protein resides in the membrane. This is an uncharacterized protein from Dictyostelium discoideum (Social amoeba).